The primary structure comprises 179 residues: MHAHGALLELTIGRVVKAHGIGGEVVVEIRTDDPASRFCPGNILRAKDFPRGGPERRYTVVYAREHGARLLVRLAGVSDRDAADALRGSLFVIDSLDLPPIDEPDTYYDHQLEGLQVRTMMGRDVGVVAEVLHTAAGELLAVRCDSGEVLVPFVGAIVKLVSLDDGIVEIDPPKGLLDL.

In terms of domain architecture, PRC barrel spans Glu103–Leu176.

Belongs to the RimM family. As to quaternary structure, binds ribosomal protein uS19.

The protein resides in the cytoplasm. An accessory protein needed during the final step in the assembly of 30S ribosomal subunit, possibly for assembly of the head region. Essential for efficient processing of 16S rRNA. May be needed both before and after RbfA during the maturation of 16S rRNA. It has affinity for free ribosomal 30S subunits but not for 70S ribosomes. This is Ribosome maturation factor RimM from Mycobacterium leprae (strain Br4923).